The chain runs to 451 residues: Tryptophan--tRNA ligase (451 aa).

Residues 10–12 (TTT) and 18–19 (GN) each bind ATP. Positions 11–19 (TTGTPHLGN) match the 'HIGH' region motif. Asp143 serves as a coordination point for L-tryptophan. ATP-binding positions include 155-157 (GRD), Leu195, and 202-206 (KMSKS). The short motif at 202 to 206 (KMSKS) is the 'KMSKS' region element.

The protein belongs to the class-I aminoacyl-tRNA synthetase family. As to quaternary structure, homodimer.

It is found in the cytoplasm. The catalysed reaction is tRNA(Trp) + L-tryptophan + ATP = L-tryptophyl-tRNA(Trp) + AMP + diphosphate + H(+). Its function is as follows. Catalyzes the attachment of tryptophan to tRNA(Trp). The sequence is that of Tryptophan--tRNA ligase from Bordetella bronchiseptica (strain ATCC BAA-588 / NCTC 13252 / RB50) (Alcaligenes bronchisepticus).